Here is a 58-residue protein sequence, read N- to C-terminus: Rho-conotoxin TIA (58 aa).

The N-terminal stretch at 1–16 is a signal peptide; it reads MFTVFLLVVLATTGVS. Positions 17 to 38 are excised as a propeptide; sequence FTLDRASDGGNAVAKKSDVTAR. Residues 40-42 are interaction with ADRA1B; it reads NWR. 2 cysteine pairs are disulfide-bonded: Cys-43/Cys-49 and Cys-44/Cys-57. Residues 45 to 47 are lacks the Ser-Xaa-Pro motif that is crucial for potent interaction with nAChR; it reads LIP. Cys-57 bears the Cysteine amide mark.

It belongs to the conotoxin A superfamily. As to expression, expressed by the venom duct.

Its subcellular location is the secreted. In terms of biological role, allosteric inhibitor of alpha-1B adrenergic receptors (ADRA1B). Binds to an allosteric modulatory site on transmembrane helix 6 and 7 at the base of extracellular loop 3 of ADRA1B. Also weakly inhibits alpha-1A (ADRA1A) and alpha-1D (ADRA1D) adrenergic receptors in a competitive manner. Potently inhibits contractions of vas deferens, spleen and aorta in response to noradrenaline. May also inhibits nicotinic acetylcholine receptors with a possible distinct nAChR binding mode from other alpha-conotoxins, due to a different three residue motif (lacks the Ser-Xaa-Pro motif). The protein is Rho-conotoxin TIA of Conus tulipa (Fish-hunting cone snail).